The chain runs to 164 residues: Cytochrome c-type biogenesis protein CcmE (164 aa).

The Cytoplasmic segment spans residues 1–8 (MNPRRKQR). The chain crosses the membrane as a helical; Signal-anchor for type II membrane protein span at residues 9 to 29 (LAVVGIIGFLIVSAVGLMLYA). The Periplasmic segment spans residues 30–164 (LNDSIDLFYT…YESSNGAGSK (135 aa)). Residues His128 and Tyr132 each coordinate heme. The tract at residues 142–164 (KGIKHVKPENMPTYESSNGAGSK) is disordered. Over residues 154-164 (TYESSNGAGSK) the composition is skewed to polar residues.

It belongs to the CcmE/CycJ family.

It is found in the cell inner membrane. Heme chaperone required for the biogenesis of c-type cytochromes. Transiently binds heme delivered by CcmC and transfers the heme to apo-cytochromes in a process facilitated by CcmF and CcmH. In Alteromonas mediterranea (strain DSM 17117 / CIP 110805 / LMG 28347 / Deep ecotype), this protein is Cytochrome c-type biogenesis protein CcmE.